We begin with the raw amino-acid sequence, 316 residues long: Thymidylate synthase (316 aa).

DUMP is bound by residues Arg-23 and 178 to 179; that span reads RR. Cys-198 serves as the catalytic Nucleophile. Residues 218 to 221, Asn-229, and 259 to 261 each bind dUMP; these read RSAD and HIY. Asp-221 contacts (6R)-5,10-methylene-5,6,7,8-tetrahydrofolate. Ala-315 serves as a coordination point for (6R)-5,10-methylene-5,6,7,8-tetrahydrofolate.

It belongs to the thymidylate synthase family. Bacterial-type ThyA subfamily. As to quaternary structure, homodimer.

The protein localises to the cytoplasm. It catalyses the reaction dUMP + (6R)-5,10-methylene-5,6,7,8-tetrahydrofolate = 7,8-dihydrofolate + dTMP. It participates in pyrimidine metabolism; dTTP biosynthesis. Its function is as follows. Catalyzes the reductive methylation of 2'-deoxyuridine-5'-monophosphate (dUMP) to 2'-deoxythymidine-5'-monophosphate (dTMP) while utilizing 5,10-methylenetetrahydrofolate (mTHF) as the methyl donor and reductant in the reaction, yielding dihydrofolate (DHF) as a by-product. This enzymatic reaction provides an intracellular de novo source of dTMP, an essential precursor for DNA biosynthesis. The polypeptide is Thymidylate synthase (Levilactobacillus brevis (strain ATCC 367 / BCRC 12310 / CIP 105137 / JCM 1170 / LMG 11437 / NCIMB 947 / NCTC 947) (Lactobacillus brevis)).